The primary structure comprises 385 residues: Succinyl-diaminopimelate desuccinylase (385 aa).

H73 serves as a coordination point for Zn(2+). Residue D75 is part of the active site. Position 106 (D106) interacts with Zn(2+). E141 serves as the catalytic Proton acceptor. Residues E142, E170, and H359 each coordinate Zn(2+).

The protein belongs to the peptidase M20A family. DapE subfamily. In terms of assembly, homodimer. Requires Zn(2+) as cofactor. The cofactor is Co(2+).

It catalyses the reaction N-succinyl-(2S,6S)-2,6-diaminopimelate + H2O = (2S,6S)-2,6-diaminopimelate + succinate. The protein operates within amino-acid biosynthesis; L-lysine biosynthesis via DAP pathway; LL-2,6-diaminopimelate from (S)-tetrahydrodipicolinate (succinylase route): step 3/3. Functionally, catalyzes the hydrolysis of N-succinyl-L,L-diaminopimelic acid (SDAP), forming succinate and LL-2,6-diaminopimelate (DAP), an intermediate involved in the bacterial biosynthesis of lysine and meso-diaminopimelic acid, an essential component of bacterial cell walls. This is Succinyl-diaminopimelate desuccinylase from Methylorubrum extorquens (strain CM4 / NCIMB 13688) (Methylobacterium extorquens).